The chain runs to 234 residues: Glycerol uptake facilitator protein (234 aa).

Transmembrane regions (helical) follow at residues 9-29 (FLGTLILILLGNGVVAGVVLP), 37-57 (GWIVITMGWGIAVAVAVFVSG), 61-81 (PAHLNPAVTIGVALKGGLPWA), 83-103 (VLPYILAQFAGAMLGQILVWL), 135-155 (LISEILGTFVLVLTIFALGLY), and 159-179 (AGIGTFAVGTLIVGIGLSLGG). An NPA 1 motif is present at residues 65 to 67 (NPA). An NPA 2 motif is present at residues 186–188 (NPA). Residues 214-234 (WIPVVGPVIGAALAVLVFSLF) form a helical membrane-spanning segment.

Belongs to the MIP/aquaporin (TC 1.A.8) family.

The protein resides in the cell membrane. The enzyme catalyses glycerol(in) = glycerol(out). Its function is as follows. Mediates glycerol diffusion across the cytoplasmic membrane via a pore-type mechanism. This chain is Glycerol uptake facilitator protein (glpF), found in Streptococcus pneumoniae (strain ATCC BAA-255 / R6).